Reading from the N-terminus, the 306-residue chain is tRNA pseudouridine synthase B (306 aa).

The active-site Nucleophile is Asp39.

The protein belongs to the pseudouridine synthase TruB family. Type 1 subfamily.

The catalysed reaction is uridine(55) in tRNA = pseudouridine(55) in tRNA. Responsible for synthesis of pseudouridine from uracil-55 in the psi GC loop of transfer RNAs. This chain is tRNA pseudouridine synthase B, found in Arthrobacter sp. (strain FB24).